A 457-amino-acid chain; its full sequence is Endo-1,3(4)-beta-glucanase ARB_04519 (457 aa).

An N-terminal signal peptide occupies residues 1–18 (MRTTGLLLLGALAELGSA). The region spanning 19–319 (TYILEDDYQP…YMKVYQQGTA (301 aa)) is the GH16 domain. Glu-130 serves as the catalytic Nucleophile. Catalysis depends on Glu-135, which acts as the Proton donor. N-linked (GlcNAc...) asparagine glycosylation is present at Asn-200. Positions 318-397 (TAPTKPSQAP…DSCPPPTQPA (80 aa)) are disordered. Positions 333 to 352 (TPALPTMKSTSTVSSMVSAT) are enriched in low complexity. Polar residues predominate over residues 353 to 362 (QPAPTASNPT). Over residues 368–378 (PSSSSSNNGPQ) the composition is skewed to low complexity.

It belongs to the glycosyl hydrolase 16 family.

The protein resides in the secreted. It catalyses the reaction Endohydrolysis of (1-&gt;3)- or (1-&gt;4)-linkages in beta-D-glucans when the glucose residue whose reducing group is involved in the linkage to be hydrolyzed is itself substituted at C-3.. Its function is as follows. Mixed-linked glucanase involved in the degradation of complex natural cellulosic substrates. Active on laminarin. lichenan, soluble carboxymethyl cellulose but not on pustulan. This chain is Endo-1,3(4)-beta-glucanase ARB_04519, found in Arthroderma benhamiae (strain ATCC MYA-4681 / CBS 112371) (Trichophyton mentagrophytes).